Here is a 451-residue protein sequence, read N- to C-terminus: Enolase (451 aa).

(2R)-2-phosphoglycerate is bound at residue glutamine 163. Glutamate 205 acts as the Proton donor in catalysis. Mg(2+) contacts are provided by aspartate 258, glutamate 308, and aspartate 335. Lysine 360, arginine 389, serine 390, and lysine 411 together coordinate (2R)-2-phosphoglycerate. Catalysis depends on lysine 360, which acts as the Proton acceptor.

Belongs to the enolase family. Requires Mg(2+) as cofactor.

It localises to the cytoplasm. It is found in the secreted. The protein localises to the cell surface. The enzyme catalyses (2R)-2-phosphoglycerate = phosphoenolpyruvate + H2O. Its pathway is carbohydrate degradation; glycolysis; pyruvate from D-glyceraldehyde 3-phosphate: step 4/5. Functionally, catalyzes the reversible conversion of 2-phosphoglycerate (2-PG) into phosphoenolpyruvate (PEP). It is essential for the degradation of carbohydrates via glycolysis. The polypeptide is Enolase (Mycoplasma mycoides subsp. mycoides SC (strain CCUG 32753 / NCTC 10114 / PG1)).